The following is a 259-amino-acid chain: Global transcriptional regulator CodY (259 aa).

Residues 1–155 are GAF domain; sequence MELLAKTRKL…SATVVGMEIL (155 aa). Positions 203 to 222 form a DNA-binding region, H-T-H motif; sequence ASKIADRVGITRSVIVNALR. S215 is subject to Phosphoserine.

This sequence belongs to the CodY family.

The protein resides in the cytoplasm. Its function is as follows. DNA-binding global transcriptional regulator which is involved in the adaptive response to starvation and acts by directly or indirectly controlling the expression of numerous genes in response to nutrient availability. During rapid exponential growth, CodY is highly active and represses genes whose products allow adaptation to nutrient depletion. The polypeptide is Global transcriptional regulator CodY (Bacillus cytotoxicus (strain DSM 22905 / CIP 110041 / 391-98 / NVH 391-98)).